A 240-amino-acid chain; its full sequence is Ribonuclease HII (240 aa).

Residues Arg7 to Val215 enclose the RNase H type-2 domain. Asp13, Glu14, and Asp112 together coordinate a divalent metal cation.

The protein belongs to the RNase HII family. It depends on Mn(2+) as a cofactor. Mg(2+) is required as a cofactor.

The protein localises to the cytoplasm. It catalyses the reaction Endonucleolytic cleavage to 5'-phosphomonoester.. In terms of biological role, endonuclease that specifically degrades the RNA of RNA-DNA hybrids. The chain is Ribonuclease HII from Hyperthermus butylicus (strain DSM 5456 / JCM 9403 / PLM1-5).